The following is a 216-amino-acid chain: Uracil phosphoribosyltransferase (216 aa).

30–34 (KTLVR) is a binding site for GTP. Residues R80, R105, and 140–148 (DPMIATAST) each bind 5-phospho-alpha-D-ribose 1-diphosphate. Residues I203 and 208 to 210 (GDA) each bind uracil. 5-phospho-alpha-D-ribose 1-diphosphate is bound at residue D209.

Belongs to the UPRTase family. Mg(2+) is required as a cofactor.

The catalysed reaction is UMP + diphosphate = 5-phospho-alpha-D-ribose 1-diphosphate + uracil. Its pathway is pyrimidine metabolism; UMP biosynthesis via salvage pathway; UMP from uracil: step 1/1. Its activity is regulated as follows. Allosterically activated by GTP. Its function is as follows. Catalyzes the conversion of uracil and 5-phospho-alpha-D-ribose 1-diphosphate (PRPP) to UMP and diphosphate. This chain is Uracil phosphoribosyltransferase, found in Sulfurisphaera tokodaii (strain DSM 16993 / JCM 10545 / NBRC 100140 / 7) (Sulfolobus tokodaii).